The primary structure comprises 385 residues: ATP phosphoribosyltransferase regulatory subunit (385 aa).

This sequence belongs to the class-II aminoacyl-tRNA synthetase family. HisZ subfamily. In terms of assembly, heteromultimer composed of HisG and HisZ subunits.

It localises to the cytoplasm. It participates in amino-acid biosynthesis; L-histidine biosynthesis; L-histidine from 5-phospho-alpha-D-ribose 1-diphosphate: step 1/9. In terms of biological role, required for the first step of histidine biosynthesis. May allow the feedback regulation of ATP phosphoribosyltransferase activity by histidine. The polypeptide is ATP phosphoribosyltransferase regulatory subunit (Bordetella parapertussis (strain 12822 / ATCC BAA-587 / NCTC 13253)).